Here is a 424-residue protein sequence, read N- to C-terminus: Probable ribonuclease FAU-1 (424 aa).

It belongs to the FAU-1 family.

In terms of biological role, probable RNase involved in rRNA stability through maturation and/or degradation of precursor rRNAs. Binds to RNA in loop regions with AU-rich sequences. The sequence is that of Probable ribonuclease FAU-1 from Saccharolobus islandicus (strain Y.G.57.14 / Yellowstone #1) (Sulfolobus islandicus).